Reading from the N-terminus, the 543-residue chain is CTP synthase (543 aa).

Positions 1–265 (MARYIFITGG…DGEVLRHFGL (265 aa)) are amidoligase domain. Position 13 (S13) interacts with CTP. S13 contributes to the UTP binding site. Residue 14-19 (SLGKGL) participates in ATP binding. Y54 lines the L-glutamine pocket. An ATP-binding site is contributed by D71. The Mg(2+) site is built by D71 and E139. CTP contacts are provided by residues 146–148 (DIE), 186–191 (KTKPTQ), and K222. UTP contacts are provided by residues 186 to 191 (KTKPTQ) and K222. A Glutamine amidotransferase type-1 domain is found at 290–542 (TIGVVGKYVG…IAAAVKQARL (253 aa)). G354 is an L-glutamine binding site. C381 serves as the catalytic Nucleophile; for glutamine hydrolysis. Residues 382–385 (LGMQ), E405, and R470 contribute to the L-glutamine site. Active-site residues include H515 and E517.

It belongs to the CTP synthase family. As to quaternary structure, homotetramer.

It carries out the reaction UTP + L-glutamine + ATP + H2O = CTP + L-glutamate + ADP + phosphate + 2 H(+). It catalyses the reaction L-glutamine + H2O = L-glutamate + NH4(+). The catalysed reaction is UTP + NH4(+) + ATP = CTP + ADP + phosphate + 2 H(+). The protein operates within pyrimidine metabolism; CTP biosynthesis via de novo pathway; CTP from UDP: step 2/2. With respect to regulation, allosterically activated by GTP, when glutamine is the substrate; GTP has no effect on the reaction when ammonia is the substrate. The allosteric effector GTP functions by stabilizing the protein conformation that binds the tetrahedral intermediate(s) formed during glutamine hydrolysis. Inhibited by the product CTP, via allosteric rather than competitive inhibition. In terms of biological role, catalyzes the ATP-dependent amination of UTP to CTP with either L-glutamine or ammonia as the source of nitrogen. Regulates intracellular CTP levels through interactions with the four ribonucleotide triphosphates. This Novosphingobium aromaticivorans (strain ATCC 700278 / DSM 12444 / CCUG 56034 / CIP 105152 / NBRC 16084 / F199) protein is CTP synthase.